A 1118-amino-acid polypeptide reads, in one-letter code: Ubiquitin carboxyl-terminal hydrolase 8 (1118 aa).

The MIT domain maps to 33–116 (TKSYVHSALK…ESLKLRYEEA (84 aa)). 2 stretches are compositionally biased toward basic and acidic residues: residues 120-146 (KKLE…REDG) and 158-177 (LDSK…KCET). The disordered stretch occupies residues 120–177 (KKLEEKDRQEEAQRLQQKRQETGREDGGTLAKGSLENVLDSKDKTQKSNGEKNEKCET). Serine 160 bears the Phosphoserine mark. Positions 195–313 (KNISLIIMDA…WLLCYPQYTT (119 aa)) constitute a Rhodanese domain. 2 positions are modified to phosphoserine: serine 392 and serine 400. Residues 402–447 (KNVPQIDRTKKPAVKLPEEHRIKSESTNHEQQSPQSGKVIPDRSTK) form a disordered region. Residues 405 to 413 (PQIDRTKKP) carry the SH3-binding motif. Basic and acidic residues predominate over residues 417 to 429 (LPEEHRIKSESTN). Position 452 is a phosphoserine (serine 452). Basic and acidic residues predominate over residues 475–573 (KNKQEKELRE…AKKSVEDRGK (99 aa)). Disordered stretches follow at residues 475 to 648 (KNKQ…GRIV) and 679 to 746 (YPPE…ENKP). Position 577 is a phosphothreonine (threonine 577). Over residues 618-645 (TFREDTDDTERNKAQREPLTRARSEEMG) the composition is skewed to basic and acidic residues. The segment covering 716 to 726 (SYSSPDITQAI) has biased composition (polar residues). Phosphoserine is present on residues serine 718 and serine 719. In terms of domain architecture, USP spans 777–1109 (TGLRNLGNTC…AAYILFYTSL (333 aa)). Cysteine 786 functions as the Nucleophile in the catalytic mechanism. Threonine 945 is modified (phosphothreonine). Histidine 1067 (proton acceptor) is an active-site residue.

The protein belongs to the peptidase C19 family. As to quaternary structure, forms a ternary complex with RNF128 and OTUB1. Interacts (via C-terminal UCH catalytic domain) with OTUB1 isoform 1. Interacts with STAM2 (via SH3 domain). Interacts with DNAJB3, EGFR, EPS15, RASGRF1, RNF41, YWHAE, YWHAG and YWHAZ. Interacts with NBR1, RASGRF1, RNF41 and IST1. Associates with the ESCRT-0 complex and with microtubules. Interacts with BIRC6/bruce and KIF23/MKLP1. In terms of assembly, (Microbial infection) Interacts with Zika virus non-structural protein 1. Post-translationally, phosphorylation of Ser-718 is essential for interaction with YWHAE and for cytosol localization. Undergoes dephosphorylation at Ser-718 in the M phase. Tyrosine-phosphorylated in its N-terminal half in an EGFR-dependent manner. In terms of processing, ubiquitinated. Inactive form is mostly monoubiquitinated, but polyubiquitination happens too. Ubiquitination is increased in EGF-stimulated cells. Ubiquitination of active form is undetectable, suggesting a possibility that USP8 deubiquitinates itself, thereby regulating its own function.

The protein resides in the cytoplasm. It localises to the nucleus. The protein localises to the endosome membrane. It is found in the cell membrane. The catalysed reaction is Thiol-dependent hydrolysis of ester, thioester, amide, peptide and isopeptide bonds formed by the C-terminal Gly of ubiquitin (a 76-residue protein attached to proteins as an intracellular targeting signal).. Hydrolase that can remove conjugated ubiquitin from proteins and therefore plays an important regulatory role at the level of protein turnover by preventing degradation. Converts both 'Lys-48' an 'Lys-63'-linked ubiquitin chains. Catalytic activity is enhanced in the M phase. Involved in cell proliferation. Required to enter into S phase in response to serum stimulation. May regulate T-cell anergy mediated by RNF128 via the formation of a complex containing RNF128 and OTUB1. Probably regulates the stability of STAM2 and RASGRF1. Regulates endosomal ubiquitin dynamics, cargo sorting, membrane traffic at early endosomes, and maintenance of ESCRT-0 stability. The level of protein ubiquitination on endosomes is essential for maintaining the morphology of the organelle. Deubiquitinates EPS15 and controls tyrosine kinase stability. Removes conjugated ubiquitin from EGFR thus regulating EGFR degradation and downstream MAPK signaling. Involved in acrosome biogenesis through interaction with the spermatid ESCRT-0 complex and microtubules. Deubiquitinates BIRC6/bruce and KIF23/MKLP1. Deubiquitinates BACE1 which inhibits BACE1 lysosomal degradation and modulates BACE-mediated APP cleavage and amyloid-beta formation. The sequence is that of Ubiquitin carboxyl-terminal hydrolase 8 from Homo sapiens (Human).